We begin with the raw amino-acid sequence, 335 residues long: Ferrochelatase (335 aa).

Fe cation contacts are provided by H211 and E290.

The protein belongs to the ferrochelatase family.

The protein localises to the cytoplasm. It catalyses the reaction heme b + 2 H(+) = protoporphyrin IX + Fe(2+). The protein operates within porphyrin-containing compound metabolism; protoheme biosynthesis; protoheme from protoporphyrin-IX: step 1/1. Its function is as follows. Catalyzes the ferrous insertion into protoporphyrin IX. The protein is Ferrochelatase of Sulfurihydrogenibium sp. (strain YO3AOP1).